A 317-amino-acid chain; its full sequence is Acetyl-coenzyme A carboxylase carboxyl transferase subunit alpha (317 aa).

The 262-residue stretch at 32–293 (NLSEEIARLE…KRLLTSELQA (262 aa)) folds into the CoA carboxyltransferase C-terminal domain.

Belongs to the AccA family. In terms of assembly, acetyl-CoA carboxylase is a heterohexamer composed of biotin carboxyl carrier protein (AccB), biotin carboxylase (AccC) and two subunits each of ACCase subunit alpha (AccA) and ACCase subunit beta (AccD).

The protein localises to the cytoplasm. The enzyme catalyses N(6)-carboxybiotinyl-L-lysyl-[protein] + acetyl-CoA = N(6)-biotinyl-L-lysyl-[protein] + malonyl-CoA. It functions in the pathway lipid metabolism; malonyl-CoA biosynthesis; malonyl-CoA from acetyl-CoA: step 1/1. Functionally, component of the acetyl coenzyme A carboxylase (ACC) complex. First, biotin carboxylase catalyzes the carboxylation of biotin on its carrier protein (BCCP) and then the CO(2) group is transferred by the carboxyltransferase to acetyl-CoA to form malonyl-CoA. The protein is Acetyl-coenzyme A carboxylase carboxyl transferase subunit alpha of Legionella pneumophila (strain Paris).